The following is a 124-amino-acid chain: Small ribosomal subunit protein uS12 (124 aa).

3-methylthioaspartic acid is present on aspartate 89.

This sequence belongs to the universal ribosomal protein uS12 family. In terms of assembly, part of the 30S ribosomal subunit. Contacts proteins S8 and S17. May interact with IF1 in the 30S initiation complex.

With S4 and S5 plays an important role in translational accuracy. In terms of biological role, interacts with and stabilizes bases of the 16S rRNA that are involved in tRNA selection in the A site and with the mRNA backbone. Located at the interface of the 30S and 50S subunits, it traverses the body of the 30S subunit contacting proteins on the other side and probably holding the rRNA structure together. The combined cluster of proteins S8, S12 and S17 appears to hold together the shoulder and platform of the 30S subunit. In Hamiltonella defensa subsp. Acyrthosiphon pisum (strain 5AT), this protein is Small ribosomal subunit protein uS12.